A 72-amino-acid polypeptide reads, in one-letter code: Translation initiation factor IF-1 (72 aa).

The 72-residue stretch at 1–72 (MSNDDSIEFE…TKGRITYRMK (72 aa)) folds into the S1-like domain.

This sequence belongs to the IF-1 family. In terms of assembly, component of the 30S ribosomal translation pre-initiation complex which assembles on the 30S ribosome in the order IF-2 and IF-3, IF-1 and N-formylmethionyl-tRNA(fMet); mRNA recruitment can occur at any time during PIC assembly.

It is found in the cytoplasm. Its function is as follows. One of the essential components for the initiation of protein synthesis. Stabilizes the binding of IF-2 and IF-3 on the 30S subunit to which N-formylmethionyl-tRNA(fMet) subsequently binds. Helps modulate mRNA selection, yielding the 30S pre-initiation complex (PIC). Upon addition of the 50S ribosomal subunit IF-1, IF-2 and IF-3 are released leaving the mature 70S translation initiation complex. In Xanthomonas campestris pv. campestris (strain B100), this protein is Translation initiation factor IF-1.